Reading from the N-terminus, the 574-residue chain is MAATAIEPSSSISFTSSHLSNPSPVVTTYHSAANLEELSSNLEQLLTNPDCDYTDAEIIIEEEANPVSVHRCVLAARSKFFLDLFKKDKDSSEKKPKYQMKDLLPYGNVGREAFLHFLSYIYTGRLKPFPIEVSTCVDSVCAHDSCKPAIDFAVELMYASFVFQIPDLVSSFQRKLRNYVEKSLVENVLPILLVAFHCDLTQLLDQCIERVARSDLDRFCIEKELPLEVLEKIKQLRVKSVNIPEVEDKSIERTGKVLKALDSDDVELVKLLLTESDITLDQANGLHYAVAYSDPKVVTQVLDLDMADVNFRNSRGYTVLHIAAMRREPTIIIPLIQKGANASDFTFDGRSAVNICRRLTRPKDYHTKTSRKEPSKYRLCIDILEREIRRNPLVSGDTPTCSHSMPEDLQMRLLYLEKRVGLAQLFFPAEANVAMDVANVEGTSECTGLLTPPPSNDTTENLGKVDLNETPYVQTKRMLTRMKALMKTVETGRRYFPSCYEVLDKYMDQYMDEEIPDMSYPEKGTVKERRQKRMRYNELKNDVKKAYSKDKVARSCLSSSSPASSLREALENPT.

Residues 1–21 (MAATAIEPSSSISFTSSHLSN) are disordered. Residues 9–20 (SSSISFTSSHLS) show a composition bias toward low complexity. Residue serine 11 is modified to Phosphoserine. Positions 54-130 (TDAEIIIEEE…IYTGRLKPFP (77 aa)) constitute a BTB domain. The segment at 133–147 (VSTCVDSVCAHDSCK) adopts a C2HC NPR-type zinc-finger fold. Zn(2+) is bound by residues cysteine 136, cysteine 141, histidine 143, and cysteine 146. ANK repeat units lie at residues 252–280 (ERTGKVLKALDSDDVELVKLLLTESDITL), 281–311 (DQANGLHYAVAYSDPKVVTQVLDLDMADVNF), and 315–344 (RGYTVLHIAAMRREPTIIIPLIQKGANASD). The interval 373-516 (EPSKYRLCID…MDQYMDEEIP (144 aa)) is salicylic acid-binding core (SBC). Arginine 419 is a salicylate binding site. The tract at residues 521-574 (PEKGTVKERRQKRMRYNELKNDVKKAYSKDKVARSCLSSSSPASSLREALENPT) is disordered. Over residues 535–553 (RYNELKNDVKKAYSKDKVA) the composition is skewed to basic and acidic residues. Residues 554–567 (RSCLSSSSPASSLR) are compositionally biased toward low complexity.

This sequence belongs to the plant 'ANKYRIN-BTB/POZ' family. 'NPR1-like' subfamily. Forms homodimers, homotetramers and heterodimers with NPR3 in the presence of salicylic acid (SA). Interacts with TGA2, TGA3, TGA5, TGA6 and TGA7. Interacts with CUL3A, a core component of the cullin-RING ubiquitin ligases (CRL). Binds to NPR1; this interaction is disrupted by association with SA, probably due to conformational changes.

It is found in the nucleus. It functions in the pathway protein modification; protein ubiquitination. Salicylic acid (SA)-binding substrate-specific adapter of an E3 ubiquitin-protein ligase complex (CUL3-RBX1-BTB) which mediates the ubiquitination and subsequent proteasomal degradation of NPR1 in the absence of SA. Together with NPR3, acts as receptor of salicylic acid to monitor immunity in a NPR1-dependent manner and induce systemic acquired resistance (SAR). Involved in the regulation of basal defense responses against pathogens, and may be implicated in the cross-talk between the SA- and JA-dependent signaling pathways. This chain is Regulatory protein NPR4, found in Arabidopsis thaliana (Mouse-ear cress).